We begin with the raw amino-acid sequence, 394 residues long: S-adenosylmethionine synthase 1 (394 aa).

Glutamate 11 serves as a coordination point for Mg(2+). Residue histidine 17 participates in ATP binding. Glutamate 45 is a K(+) binding site. L-methionine contacts are provided by glutamate 58 and glutamine 101. ATP contacts are provided by residues 169 to 171 (DGK), 237 to 240 (SGRF), aspartate 248, 254 to 255 (RK), alanine 271, lysine 275, and lysine 279. Aspartate 248 is an L-methionine binding site. Lysine 279 is an L-methionine binding site.

This sequence belongs to the AdoMet synthase family. Homotetramer. Requires Mn(2+) as cofactor. Mg(2+) is required as a cofactor. It depends on Co(2+) as a cofactor. The cofactor is K(+).

The protein resides in the cytoplasm. The enzyme catalyses L-methionine + ATP + H2O = S-adenosyl-L-methionine + phosphate + diphosphate. It functions in the pathway amino-acid biosynthesis; S-adenosyl-L-methionine biosynthesis; S-adenosyl-L-methionine from L-methionine: step 1/1. Its function is as follows. Catalyzes the formation of S-adenosylmethionine from methionine and ATP. The reaction comprises two steps that are both catalyzed by the same enzyme: formation of S-adenosylmethionine (AdoMet) and triphosphate, and subsequent hydrolysis of the triphosphate. In Triticum monococcum (Einkorn wheat), this protein is S-adenosylmethionine synthase 1 (SAMS1).